The chain runs to 156 residues: Small ribosomal subunit protein uS7 (156 aa).

Belongs to the universal ribosomal protein uS7 family. As to quaternary structure, part of the 30S ribosomal subunit. Contacts proteins S9 and S11.

Functionally, one of the primary rRNA binding proteins, it binds directly to 16S rRNA where it nucleates assembly of the head domain of the 30S subunit. Is located at the subunit interface close to the decoding center, probably blocks exit of the E-site tRNA. This chain is Small ribosomal subunit protein uS7, found in Dictyoglomus turgidum (strain DSM 6724 / Z-1310).